Here is a 399-residue protein sequence, read N- to C-terminus: Acetate kinase (399 aa).

Residue N7 participates in Mg(2+) binding. Position 14 (K14) interacts with ATP. Position 91 (R91) interacts with substrate. D148 (proton donor/acceptor) is an active-site residue. ATP-binding positions include 208 to 212, 283 to 285, and 331 to 335; these read HLGNG, DFR, and GIGEN. E384 provides a ligand contact to Mg(2+).

This sequence belongs to the acetokinase family. In terms of assembly, homodimer. The cofactor is Mg(2+). It depends on Mn(2+) as a cofactor.

It is found in the cytoplasm. It carries out the reaction acetate + ATP = acetyl phosphate + ADP. Its pathway is metabolic intermediate biosynthesis; acetyl-CoA biosynthesis; acetyl-CoA from acetate: step 1/2. In terms of biological role, catalyzes the formation of acetyl phosphate from acetate and ATP. Can also catalyze the reverse reaction. This chain is Acetate kinase, found in Acetivibrio thermocellus (strain ATCC 27405 / DSM 1237 / JCM 9322 / NBRC 103400 / NCIMB 10682 / NRRL B-4536 / VPI 7372) (Clostridium thermocellum).